The sequence spans 514 residues: Peptide chain release factor 3 (514 aa).

In terms of domain architecture, tr-type G spans Lys8–His268. GTP-binding positions include Ser17–Thr24, Asp85–His89, and Asn139–Asp142.

Belongs to the TRAFAC class translation factor GTPase superfamily. Classic translation factor GTPase family. PrfC subfamily.

It is found in the cytoplasm. In terms of biological role, increases the formation of ribosomal termination complexes and stimulates activities of RF-1 and RF-2. It binds guanine nucleotides and has strong preference for UGA stop codons. It may interact directly with the ribosome. The stimulation of RF-1 and RF-2 is significantly reduced by GTP and GDP, but not by GMP. In Streptococcus pyogenes serotype M28 (strain MGAS6180), this protein is Peptide chain release factor 3.